The sequence spans 205 residues: Coatomer subunit zeta-2 (205 aa).

The span at 1-12 (MQRPEAWPRPHP) shows a compositional bias: basic and acidic residues. A disordered region spans residues 1–33 (MQRPEAWPRPHPGEGASAAQAGGAAPPTRATEQ). Positions 13-30 (GEGASAAQAGGAAPPTRA) are enriched in low complexity.

The protein belongs to the adaptor complexes small subunit family. As to quaternary structure, oligomeric complex.

It is found in the cytoplasm. It localises to the cytosol. The protein resides in the endoplasmic reticulum-Golgi intermediate compartment membrane. Its subcellular location is the golgi apparatus membrane. The protein localises to the cytoplasmic vesicle. It is found in the COPI-coated vesicle membrane. Its function is as follows. The coatomer is a cytosolic protein complex that binds to dilysine motifs and reversibly associates with Golgi non-clathrin-coated vesicles, which further mediate biosynthetic protein transport from the ER, via the Golgi up to the trans Golgi network. Coatomer complex is required for budding from Golgi membranes, and is essential for the retrograde Golgi-to-ER transport of dilysine-tagged proteins. The zeta subunit may be involved in regulating the coat assembly and, hence, the rate of biosynthetic protein transport due to its association-dissociation properties with the coatomer complex. The polypeptide is Coatomer subunit zeta-2 (Copz2) (Mus musculus (Mouse)).